The primary structure comprises 75 residues: Brevinin-2SN1 (75 aa).

Positions 1-22 (MFTMKKPLLFLFFLGTISLSFC) are cleaved as a signal peptide. A propeptide spans 23–40 (EEERGADEDDEVEMTEEE) (removed in mature form). Cys69 and Cys75 are oxidised to a cystine.

The protein belongs to the frog skin active peptide (FSAP) family. Brevinin subfamily. Expressed by the skin glands.

The protein localises to the secreted. In terms of biological role, antimicrobial peptide. Active against some Gram-negative and a variety of Gram-positive bacterial strains. Active against fungus C.glabrata 090902 but not against C.albicans ATCC 10231. Shows hemolytic activity against human erythrocytes. This Sylvirana spinulosa (Fine-spined frog) protein is Brevinin-2SN1.